Consider the following 211-residue polypeptide: MADS-box protein AGL72 (211 aa).

The 61-residue stretch at 1 to 61 folds into the MADS-box domain; that stretch reads MVRGKIEIKK…GRLYEFASSD (61 aa). One can recognise a K-box domain in the interval 88 to 187; that stretch reads VQGLKKEMVT…LCQVGERPMG (100 aa).

It localises to the nucleus. Its function is as follows. MADS-box transcription factor that acts with AGL42 and AGL71 in the control of flowering time. Promotes flowering at the shoot apical and axillary meristems. Seems to act through a gibberellin-dependent pathway. Interacts genetically with SOC1 and its expression is directly regulated by SOC1. The chain is MADS-box protein AGL72 (AGL72) from Arabidopsis thaliana (Mouse-ear cress).